We begin with the raw amino-acid sequence, 366 residues long: MTTNSNLEALSDAGVSIWLDDLSRKRINSGNLAELISDYAVVGVTSNPTIFAKALSNAADYDEQVRELAARGASVDDAVRELTTRDIREAADIFRNIYEAGHDGRVSLEVDPRLAHDTERTVAEALDLWKAVDRPNLMVKIPATVEGLPAITRVLAEGVSVNVTLIFSVERYRDVMDAYLAGLEQAKANGHDLARIASVASFFVSRVDTEIDKRLESVEGGQELRGKAAIANARLAYAAYEEVFASDRFKALAAEGGKPQRPLWASTGVKDPSYSDTRYVDELVAPNTVNTMPEATLFASADHADVRGDQVSGKAAESQQVFDSLSAAGIDLDDVFAVLEREGVDKFEKSWEELLQTVREQLDQAK.

K140 serves as the catalytic Schiff-base intermediate with substrate.

This sequence belongs to the transaldolase family. Type 2 subfamily.

The protein localises to the cytoplasm. The enzyme catalyses D-sedoheptulose 7-phosphate + D-glyceraldehyde 3-phosphate = D-erythrose 4-phosphate + beta-D-fructose 6-phosphate. The protein operates within carbohydrate degradation; pentose phosphate pathway; D-glyceraldehyde 3-phosphate and beta-D-fructose 6-phosphate from D-ribose 5-phosphate and D-xylulose 5-phosphate (non-oxidative stage): step 2/3. In terms of biological role, transaldolase is important for the balance of metabolites in the pentose-phosphate pathway. The sequence is that of Transaldolase from Saccharopolyspora erythraea (strain ATCC 11635 / DSM 40517 / JCM 4748 / NBRC 13426 / NCIMB 8594 / NRRL 2338).